A 316-amino-acid polypeptide reads, in one-letter code: 4-hydroxy-3-methylbut-2-enyl diphosphate reductase (316 aa).

Position 12 (Cys12) interacts with [4Fe-4S] cluster. His41 and His74 together coordinate (2E)-4-hydroxy-3-methylbut-2-enyl diphosphate. 2 residues coordinate dimethylallyl diphosphate: His41 and His74. The isopentenyl diphosphate site is built by His41 and His74. A [4Fe-4S] cluster-binding site is contributed by Cys96. Position 124 (His124) interacts with (2E)-4-hydroxy-3-methylbut-2-enyl diphosphate. His124 serves as a coordination point for dimethylallyl diphosphate. An isopentenyl diphosphate-binding site is contributed by His124. The active-site Proton donor is Glu126. Thr169 serves as a coordination point for (2E)-4-hydroxy-3-methylbut-2-enyl diphosphate. Cys199 is a binding site for [4Fe-4S] cluster. Residues Ser227, Ser228, Asn229, and Ser271 each contribute to the (2E)-4-hydroxy-3-methylbut-2-enyl diphosphate site. Dimethylallyl diphosphate is bound by residues Ser227, Ser228, Asn229, and Ser271. The isopentenyl diphosphate site is built by Ser227, Ser228, Asn229, and Ser271.

The protein belongs to the IspH family. The cofactor is [4Fe-4S] cluster.

It catalyses the reaction isopentenyl diphosphate + 2 oxidized [2Fe-2S]-[ferredoxin] + H2O = (2E)-4-hydroxy-3-methylbut-2-enyl diphosphate + 2 reduced [2Fe-2S]-[ferredoxin] + 2 H(+). It carries out the reaction dimethylallyl diphosphate + 2 oxidized [2Fe-2S]-[ferredoxin] + H2O = (2E)-4-hydroxy-3-methylbut-2-enyl diphosphate + 2 reduced [2Fe-2S]-[ferredoxin] + 2 H(+). It participates in isoprenoid biosynthesis; dimethylallyl diphosphate biosynthesis; dimethylallyl diphosphate from (2E)-4-hydroxy-3-methylbutenyl diphosphate: step 1/1. The protein operates within isoprenoid biosynthesis; isopentenyl diphosphate biosynthesis via DXP pathway; isopentenyl diphosphate from 1-deoxy-D-xylulose 5-phosphate: step 6/6. Its function is as follows. Catalyzes the conversion of 1-hydroxy-2-methyl-2-(E)-butenyl 4-diphosphate (HMBPP) into a mixture of isopentenyl diphosphate (IPP) and dimethylallyl diphosphate (DMAPP). Acts in the terminal step of the DOXP/MEP pathway for isoprenoid precursor biosynthesis. The polypeptide is 4-hydroxy-3-methylbut-2-enyl diphosphate reductase (Vibrio cholerae serotype O1 (strain ATCC 39315 / El Tor Inaba N16961)).